A 1371-amino-acid chain; its full sequence is Pleckstrin homology-like domain family B member 1 (1371 aa).

Serine 51 is modified (phosphoserine). One can recognise an FHA domain in the interval 64-125 (TVIGSAARDI…LTQGCMLCLG (62 aa)). At arginine 131 the chain carries Asymmetric dimethylarginine. Residues 153–182 (GPTYNPGSAESESLVNGNHTAQPATRAPSA) form a disordered region. The span at 157-175 (NPGSAESESLVNGNHTAQP) shows a compositional bias: polar residues. 3 positions are modified to phosphoserine: serine 192, serine 220, and serine 223. 2 disordered regions span residues 211-336 (AAGK…TDSP) and 368-573 (PSSG…RVPI). Low complexity-rich tracts occupy residues 252–273 (SPAF…HSPS) and 296–312 (LQPP…SDSP). 2 positions are modified to phosphoserine: serine 325 and serine 335. Residues 368–377 (PSSGARSQPA) are compositionally biased toward polar residues. Phosphoserine occurs at positions 382, 405, 431, 445, 463, 472, 491, and 503. Positions 464–477 (PSLSRRALSPLPAR) are enriched in low complexity. Positions 483 to 493 (KLSREVAESPR) are enriched in basic and acidic residues. Arginine 514 is subject to Omega-N-methylarginine. A phosphoserine mark is found at serine 520 and serine 522. Threonine 524 bears the Phosphothreonine mark. 8 positions are modified to phosphoserine: serine 535, serine 541, serine 553, serine 557, serine 565, serine 580, serine 585, and serine 683. Over residues 547 to 559 (GSLTGASPRQSPR) the composition is skewed to polar residues. Disordered stretches follow at residues 672–714 (ESGG…GAKH) and 942–1020 (GLAA…QNGT). Basic and acidic residues-rich tracts occupy residues 682 to 696 (ESME…KEEC) and 703 to 714 (QQEHEDAPGAKH). The stretch at 688–798 (DEENLKEECS…ETGIQKDRDK (111 aa)) forms a coiled coil. Serine 976 and serine 1022 each carry phosphoserine. A compositionally biased stretch (low complexity) spans 976–997 (SPLPRTRSGPLPSSSGSSSSSS). The interval 1124–1143 (SMETSISTGGNSACSPDNMS) is disordered. Positions 1150–1216 (MGKIEEMEKM…QQLVEKEVKL (67 aa)) form a coiled coil. The PH domain maps to 1261-1364 (SKVCRGYLIK…WMDVIVTGAE (104 aa)).

The chain is Pleckstrin homology-like domain family B member 1 (Phldb1) from Mus musculus (Mouse).